Consider the following 175-residue polypeptide: MAPEDTNPQSSHRRTRSTSRSRPTTPLRPSSRSSFRSSARGSVYGDNAAFPLNAFEPAFAELADAVADLEANMMHFQLMHESLARFSESFASFLYGLNMNAFCVDFPEGPITESFKRMKLKEEEMQASSQIPSAWRGDPPISTPTAIYPRTDIRILIVKSGGYTWWKRRASWGSG.

A disordered region spans residues Met1–Ala39. Positions Arg20–Ala39 are enriched in low complexity.

The protein belongs to the DASH complex DAM1 family. As to quaternary structure, component of the DASH complex consisting of ASK1, DAD1, DAD2, DAD3, DAD4, DAM1, DUO1, HSK3, SPC19 and SPC34, with a stoichiometry of one copy of each subunit per complex. Multiple DASH complexes oligomerize to form a ring that encircles spindle microtubules and organizes the rod-like NDC80 complexes of the outer kinetochore. DASH complex oligomerization strengthens microtubule attachments. On cytoplasmic microtubules, DASH complexes appear to form patches instead of rings.

The protein resides in the chromosome. It localises to the centromere. Its subcellular location is the kinetochore. It is found in the cytoplasm. The protein localises to the cytoskeleton. The protein resides in the spindle. It localises to the nucleus. Its function is as follows. Component of the DASH complex that connects microtubules with kinetochores and couples microtubule depolymerisation to chromosome movement; it is involved in retrieving kinetochores to the spindle poles before their re-orientation on the spindle in early mitosis and allows microtubule depolymerization to pull chromosomes apart and resist detachment during anaphase. Kinetochores, consisting of a centromere-associated inner segment and a microtubule-contacting outer segment, play a crucial role in chromosome segregation by mediating the physical connection between centromeric DNA and microtubules. Kinetochores also serve as an input point for the spindle assembly checkpoint, which delays anaphase until all chromosomes have bioriented on the mitotic spindle. This chain is DASH complex subunit DAM1, found in Chaetomium thermophilum (strain DSM 1495 / CBS 144.50 / IMI 039719) (Thermochaetoides thermophila).